Consider the following 938-residue polypeptide: Collagen alpha-1(I) chain (938 aa).

The interval G1–P938 is disordered. Residues P18, P21, P24, P33, P36, P39, P54, P69, P75, P84, and P90 each carry the 4-hydroxyproline modification. Low complexity predominate over residues P26–M45. Basic and acidic residues predominate over residues N57 to E71. Position 93 is a 5-hydroxylysine; alternate (K93). O-linked (Gal...) hydroxylysine; alternate glycosylation occurs at K93. Phosphoserine is present on S99. The segment covering D107 to A135 has biased composition (low complexity). Residues P117, P138, P147, P150, P177, P180, P192, P198, P207, P213, P216, and P231 each carry the 4-hydroxyproline modification. The span at P137–F149 shows a compositional bias: pro residues. Residues A183 to S222 show a composition bias toward low complexity. Residue K234 is modified to 5-hydroxylysine. 8 positions are modified to 4-hydroxyproline: P240, P243, P255, P264, P279, P285, P294, and P300. Gly residues predominate over residues G289–G298. 5-hydroxylysine is present on K309. A 4-hydroxyproline mark is found at P314, P323, P329, P335, P344, P347, P356, P365, P371, P383, P392, P401, P404, P422, P439, P445, P451, P458, P464, P476, P485, P497, P503, P509, and P518. The segment covering K338–R364 has biased composition (low complexity). Positions A373 to P392 are enriched in low complexity. At K530 the chain carries 5-hydroxylysine. 4-hydroxyproline occurs at positions 536, 551, and 557. The span at S563 to A577 shows a compositional bias: low complexity. S566 is subject to Phosphoserine. Residues P578, P584, P587, P596, P602, P620, P629, and P638 each carry the 4-hydroxyproline modification. Over residues A590–A617 the composition is skewed to low complexity. Pro residues predominate over residues P619–P631. Position 641 is a 5-hydroxylysine (K641). A compositionally biased stretch (low complexity) spans S646–V662. 2 positions are modified to 4-hydroxyproline: P650 and P656. At P664 the chain carries 3-hydroxyproline. P665, P674, P677, P693, P703, P712, P730, P739, P742, P748, P763, P769, P775, P784, and P790 each carry 4-hydroxyproline. Residues P762 to A772 show a composition bias toward pro residues. K799 is modified (5-hydroxylysine). Positions P807 to V822 are enriched in pro residues. 3 positions are modified to 4-hydroxyproline: P810, P813, and P816. Low complexity predominate over residues A843–P867. 4 positions are modified to 4-hydroxyproline: P871, P874, P892, and P907. Low complexity predominate over residues P874 to P907. P912 is subject to 3-hydroxyproline. P913 bears the 4-hydroxyproline mark. Positions V923–P938 are enriched in pro residues. Position 925 is a 3-hydroxyproline (P925). P926 bears the 4-hydroxyproline mark. Position 928 is a 3-hydroxyproline (P928). Position 929 is a 4-hydroxyproline (P929). P931 bears the 3-hydroxyproline mark. P932, P935, and P938 each carry 4-hydroxyproline.

This sequence belongs to the fibrillar collagen family. Trimers of one alpha 2(I) and two alpha 1(I) chains. Contains mostly 4-hydroxyproline. Proline residues at the third position of the tripeptide repeating unit (G-X-Y) are hydroxylated in some or all of the chains. Post-translationally, contains 3-hydroxyproline at a few sites. This modification occurs on the first proline residue in the sequence motif Gly-Pro-Hyp, where Hyp is 4-hydroxyproline. In terms of processing, lysine residues at the third position of the tripeptide repeating unit (G-X-Y) are 5-hydroxylated in some or all of the chains. O-glycosylated on hydroxylated lysine residues. The O-linked glycan consists of a Glc-Gal disaccharide. In terms of tissue distribution, expressed in bones.

The protein localises to the secreted. The protein resides in the extracellular space. Its subcellular location is the extracellular matrix. Functionally, type I collagen is a member of group I collagen (fibrillar forming collagen). The protein is Collagen alpha-1(I) chain of Megalonyx jeffersonii (Jefferson's ground sloth).